The chain runs to 602 residues: Elongation factor 4 (602 aa).

A tr-type G domain is found at 6–188 (DHIRNFSIVA…AIVNKLPAPK (183 aa)). GTP is bound by residues 18–23 (DHGKST) and 135–138 (NKID).

The protein belongs to the TRAFAC class translation factor GTPase superfamily. Classic translation factor GTPase family. LepA subfamily.

The protein localises to the cell inner membrane. It catalyses the reaction GTP + H2O = GDP + phosphate + H(+). Its function is as follows. Required for accurate and efficient protein synthesis under certain stress conditions. May act as a fidelity factor of the translation reaction, by catalyzing a one-codon backward translocation of tRNAs on improperly translocated ribosomes. Back-translocation proceeds from a post-translocation (POST) complex to a pre-translocation (PRE) complex, thus giving elongation factor G a second chance to translocate the tRNAs correctly. Binds to ribosomes in a GTP-dependent manner. This Brucella melitensis biotype 2 (strain ATCC 23457) protein is Elongation factor 4.